The following is a 65-amino-acid chain: Disintegrin CC8A (65 aa).

One can recognise a Disintegrin domain in the interval 1 to 65 (MNSAHPCCDP…SDCPRNRIKK (65 aa)). 4 disulfide bridges follow: Cys7/Cys30, Cys21/Cys27, Cys26/Cys51, and Cys39/Cys58. A Cell attachment site motif is present at residues 43-45 (RGD).

This sequence belongs to the disintegrin family. Dimeric disintegrin subfamily. As to quaternary structure, heterodimer with CC8B; disulfide-linked. Expressed by the venom gland.

The protein localises to the secreted. Inhibits integrins alpha-IIb/beta-3 (ITGA2B/ITGB3), alpha-V/beta-3 (ITGAV/ITGB3), and alpha-5/beta-1 (ITGA5/ITGB1). The sequence is that of Disintegrin CC8A from Cerastes cerastes (Horned desert viper).